The primary structure comprises 463 residues: Fumarate hydratase class II (463 aa).

Substrate is bound by residues 98 to 100 (SGT), 129 to 132 (HPND), 139 to 141 (SSN), and T187. H188 functions as the Proton donor/acceptor in the catalytic mechanism. S318 is a catalytic residue. Residues S319 and 324–326 (KVN) each bind substrate.

It belongs to the class-II fumarase/aspartase family. Fumarase subfamily. Homotetramer.

It is found in the cytoplasm. It carries out the reaction (S)-malate = fumarate + H2O. It participates in carbohydrate metabolism; tricarboxylic acid cycle; (S)-malate from fumarate: step 1/1. In terms of biological role, involved in the TCA cycle. Catalyzes the stereospecific interconversion of fumarate to L-malate. The sequence is that of Fumarate hydratase class II from Caulobacter vibrioides (strain ATCC 19089 / CIP 103742 / CB 15) (Caulobacter crescentus).